The sequence spans 621 residues: Chaperone protein HtpG (621 aa).

The segment at 1–328 (MTQEKKKFDA…SEDLPLNISR (328 aa)) is a; substrate-binding. The tract at residues 329 to 544 (ESLQHNNVLE…DTAMDIRMER (216 aa)) is b. The tract at residues 545–621 (FLIEQKQIAS…LNDILQKAIL (77 aa)) is c.

The protein belongs to the heat shock protein 90 family. In terms of assembly, homodimer.

The protein localises to the cytoplasm. Molecular chaperone. Has ATPase activity. This is Chaperone protein HtpG from Rickettsia typhi (strain ATCC VR-144 / Wilmington).